We begin with the raw amino-acid sequence, 485 residues long: NADH-quinone oxidoreductase subunit N (485 aa).

The next 14 helical transmembrane spans lie at 8–28 (LIAL…MLSI), 35–55 (FLNA…LWFV), 75–95 (LYTG…YPWL), 105–125 (FYLL…ANHL), 127–147 (ALFL…GYAF), 159–179 (YTIL…LVYA), 203–223 (LLAG…LVPF), 235–255 (PAPV…GVVM), 271–291 (VVLG…ALSQ), 297–317 (LLGY…IALQ), 326–346 (VGVY…VVSL), 374–394 (AVMT…GFIG), 408–430 (WWLV…RVAV), and 455–475 (IVVL…QPLI).

This sequence belongs to the complex I subunit 2 family. As to quaternary structure, NDH-1 is composed of 13 different subunits. Subunits NuoA, H, J, K, L, M, N constitute the membrane sector of the complex.

The protein localises to the cell inner membrane. The enzyme catalyses a quinone + NADH + 5 H(+)(in) = a quinol + NAD(+) + 4 H(+)(out). Its function is as follows. NDH-1 shuttles electrons from NADH, via FMN and iron-sulfur (Fe-S) centers, to quinones in the respiratory chain. The immediate electron acceptor for the enzyme in this species is believed to be ubiquinone. Couples the redox reaction to proton translocation (for every two electrons transferred, four hydrogen ions are translocated across the cytoplasmic membrane), and thus conserves the redox energy in a proton gradient. In Klebsiella pneumoniae (strain 342), this protein is NADH-quinone oxidoreductase subunit N.